Reading from the N-terminus, the 326-residue chain is Glutaminase 2 (326 aa).

S73, N125, E169, N176, Y200, Y252, and V270 together coordinate substrate.

The protein belongs to the glutaminase family. As to quaternary structure, homotetramer.

It carries out the reaction L-glutamine + H2O = L-glutamate + NH4(+). The polypeptide is Glutaminase 2 (Bacillus cereus (strain ATCC 14579 / DSM 31 / CCUG 7414 / JCM 2152 / NBRC 15305 / NCIMB 9373 / NCTC 2599 / NRRL B-3711)).